A 206-amino-acid chain; its full sequence is High frequency lysogenization protein HflD homolog (206 aa).

This sequence belongs to the HflD family.

It is found in the cytoplasm. Its subcellular location is the cell inner membrane. In Pseudomonas aeruginosa (strain LESB58), this protein is High frequency lysogenization protein HflD homolog.